A 385-amino-acid chain; its full sequence is UPF0284 protein P9301_04631 (385 aa).

This sequence belongs to the UPF0284 family.

This Prochlorococcus marinus (strain MIT 9301) protein is UPF0284 protein P9301_04631.